A 229-amino-acid chain; its full sequence is MENNHHLAKDSLDELNPKRGKGEHETQVSQYTVVEEATIPQSLVKTSRSADHKVMEASKVADTRTAWSTKIPAVLLPVFVINIALFKYLVFANFSTKDRVLFGLGNGGINIFSMWLLLATYETWFRSIKEVIVACGAGIRSFPQKRGVNMLYAILKLTFVNAFAIPLLMFFRSHFEQWRLGCPLVERVIGVMLNVAYFIIEIENPGLFTRVFNKYCDCLFAIRDILNRN.

Positions 1 to 26 (MENNHHLAKDSLDELNPKRGKGEHET) are enriched in basic and acidic residues. A disordered region spans residues 1–27 (MENNHHLAKDSLDELNPKRGKGEHETQ). A run of 4 helical transmembrane segments spans residues 71-91 (IPAV…YLVF), 100-120 (VLFG…LLAT), 151-171 (LYAI…LMFF), and 188-208 (VIGV…PGLF).

The protein belongs to the WTF family.

The protein resides in the endoplasmic reticulum membrane. May act in meiotic drive. This Schizosaccharomyces kambucha (Fission yeast) protein is Wtf element wtf14.